The chain runs to 119 residues: Large ribosomal subunit protein bL20 (119 aa).

The protein belongs to the bacterial ribosomal protein bL20 family.

Functionally, binds directly to 23S ribosomal RNA and is necessary for the in vitro assembly process of the 50S ribosomal subunit. It is not involved in the protein synthesizing functions of that subunit. The sequence is that of Large ribosomal subunit protein bL20 from Burkholderia cenocepacia (strain HI2424).